The following is a 304-amino-acid chain: Mas-related G-protein coupled receptor member A1 (304 aa).

The Extracellular portion of the chain corresponds to 1-17 (MDNTIPGGINITILIPN). Residue N10 is glycosylated (N-linked (GlcNAc...) asparagine). Residues 18–38 (LMIIIFGLVGLTGNGIVFWLL) form a helical membrane-spanning segment. Residues 39 to 53 (GFCLHRNAFSVYILN) are Cytoplasmic-facing. Residues 54 to 74 (LALADFFFLLGHIIDSILLLL) traverse the membrane as a helical segment. Position 75 (N75) is a topological domain, extracellular. Residues 76 to 96 (VFYPITFLLCFYTIMMVLYIA) traverse the membrane as a helical segment. Residues 97–131 (GLSMLSAISTERCLSVLCPIWYHCHRPEHTSTVMC) are Cytoplasmic-facing. Residues 132-152 (AVIWVLSLLICILNSYFCGFL) traverse the membrane as a helical segment. The Extracellular segment spans residues 153–166 (NTQYKNENGCLALN). A helical membrane pass occupies residues 167–187 (FFTAAYLMFLFVVLCLSSLAL). The Cytoplasmic segment spans residues 188 to 206 (VARLFCGTGQIKLTRLYVT). A helical membrane pass occupies residues 207 to 227 (IILSILVFLLCGLPFGIHWFL). Residues 228–243 (LFKIKDDFHVFDLGFY) lie on the Extracellular side of the membrane. A helical membrane pass occupies residues 244–264 (LASVVLTAINSCANPIIYFFV). Over 265 to 304 (GSFRHRLKHQTLKMVLQNALQDTPETAKIMVEMSRSKSEP) the chain is Cytoplasmic.

The protein belongs to the G-protein coupled receptor 1 family. Mas subfamily. In terms of tissue distribution, expressed in a subset of sensory neurons that includes nociceptors. Expressed in the subclass of non-peptidergic sensory neurons that are IB4(+) and VR1(-).

Its subcellular location is the cell membrane. Its function is as follows. Orphan receptor activated by a subset of RFamide-family neuropeptides such as FLRF-amide and FMRF-amide. Mediates its action by association with G proteins that activate a phosphatidylinositol-calcium second messenger system. Its effect is mediated by G(q) and G(11) proteins. May regulate the function of nociceptive neurons by modulation of pain perception. The polypeptide is Mas-related G-protein coupled receptor member A1 (Mrgpra1) (Mus musculus (Mouse)).